Consider the following 283-residue polypeptide: uncharacterized protein (283 aa).

6 helical membrane-spanning segments follow: residues 28–48 (LSST…ILLI), 65–85 (LTSL…GFIL), 113–133 (LKRG…FMIV), 135–155 (ILFI…IVFI), 200–220 (LNYI…NFVV), and 246–266 (IVDV…AVFA).

To M.jannaschii MJ0233.

The protein resides in the cell membrane. This is an uncharacterized protein from Methanocaldococcus jannaschii (strain ATCC 43067 / DSM 2661 / JAL-1 / JCM 10045 / NBRC 100440) (Methanococcus jannaschii).